The primary structure comprises 413 residues: Putative competence-damage inducible protein (413 aa).

It belongs to the CinA family.

This chain is Putative competence-damage inducible protein, found in Pediococcus pentosaceus (strain ATCC 25745 / CCUG 21536 / LMG 10740 / 183-1w).